A 152-amino-acid polypeptide reads, in one-letter code: Transcriptional regulator MraZ (152 aa).

SpoVT-AbrB domains follow at residues 5–52 (ATLV…PLPA) and 81–124 (ASEC…DEQT).

This sequence belongs to the MraZ family. In terms of assembly, forms oligomers.

The protein localises to the cytoplasm. The protein resides in the nucleoid. Its function is as follows. Negatively regulates its own expression and that of the subsequent genes in the proximal part of the division and cell wall (dcw) gene cluster. Acts by binding directly to DNA. May also regulate the expression of genes outside the dcw cluster. The polypeptide is Transcriptional regulator MraZ (Sodalis glossinidius (strain morsitans)).